The chain runs to 398 residues: Membrane-spanning 4-domains subfamily A member 18 (398 aa).

A run of 4 helical transmembrane segments spans residues 156 to 176 (LGAIQILIGLTHIFSAINPVL), 178 to 198 (YYPFVTWLSGYPLWGGLSYIV), 218 to 238 (SISFNIISALFAFAGIFIIIT), and 251 to 271 (AVSGGLLPFALLEFILTCVVS). The disordered stretch occupies residues 316 to 346 (TGPVSATNGPVNTTIHPVNTTTSPVNTTTSP). Positions 319–331 (VSATNGPVNTTIH) are enriched in polar residues. A compositionally biased stretch (low complexity) spans 332 to 346 (PVNTTTSPVNTTTSP).

It belongs to the MS4A family.

The protein localises to the membrane. In Homo sapiens (Human), this protein is Membrane-spanning 4-domains subfamily A member 18 (MS4A18).